A 421-amino-acid polypeptide reads, in one-letter code: 3-isopropylmalate dehydratase large subunit (421 aa).

3 residues coordinate [4Fe-4S] cluster: Cys300, Cys360, and Cys363.

This sequence belongs to the aconitase/IPM isomerase family. LeuC type 2 subfamily. As to quaternary structure, heterodimer of LeuC and LeuD. [4Fe-4S] cluster is required as a cofactor.

The catalysed reaction is (2R,3S)-3-isopropylmalate = (2S)-2-isopropylmalate. It functions in the pathway amino-acid biosynthesis; L-leucine biosynthesis; L-leucine from 3-methyl-2-oxobutanoate: step 2/4. Its function is as follows. Catalyzes the isomerization between 2-isopropylmalate and 3-isopropylmalate, via the formation of 2-isopropylmaleate. The protein is 3-isopropylmalate dehydratase large subunit of Moorella thermoacetica (strain ATCC 39073 / JCM 9320).